A 241-amino-acid polypeptide reads, in one-letter code: Platelet-derived growth factor subunit B (241 aa).

A signal peptide spans 1-20 (MNRCWALFLSLCCYLRLVSA). Residues 21–81 (EGDPIPEELY…ELESLSRGRR (61 aa)) constitute a propeptide, removed in mature form. Residue Asn-63 is glycosylated (N-linked (GlcNAc...) asparagine). Intrachain disulfides connect Cys-97–Cys-141, Cys-130–Cys-178, and Cys-134–Cys-180. Positions 191–241 (TPGSSQEQRAARTPQTRVTIRTVRVRRPPKGKHRKFKHTHDKTALKETLGA) are cleaved as a propeptide — removed in mature form. Positions 217 to 230 (RPPKGKHRKFKHTH) are enriched in basic residues. The interval 217–241 (RPPKGKHRKFKHTHDKTALKETLGA) is disordered.

This sequence belongs to the PDGF/VEGF growth factor family. Antiparallel homodimer; disulfide-linked. Antiparallel heterodimer with PDGFA; disulfide-linked. The PDGFB homodimer interacts with PDGFRA and PDGFRB homodimers, and with heterodimers formed by PDGFRA and PDGFRB. The heterodimer composed of PDGFA and PDGFB interacts with PDGFRB homodimers, and with heterodimers formed by PDGFRA and PDGFRB. Interacts with XLKD1. Interacts with LRP1. Interacts with SORL1 (via the N-terminal ectodomain). Interacts with CD82; this interaction inhibits PDGFB-mediated signaling pathway.

It localises to the secreted. In terms of biological role, growth factor that plays an essential role in the regulation of embryonic development, cell proliferation, cell migration, survival and chemotaxis. Potent mitogen for cells of mesenchymal origin. Required for normal proliferation and recruitment of pericytes and vascular smooth muscle cells in the central nervous system, skin, lung, heart and placenta. Required for normal blood vessel development, and for normal development of kidney glomeruli. Plays an important role in wound healing. Signaling is modulated by the formation of heterodimers with PDGFA. This chain is Platelet-derived growth factor subunit B (PDGFB), found in Ovis aries (Sheep).